The primary structure comprises 138 residues: Thyrotropin subunit beta (138 aa).

The first 20 residues, 1–20 (MTAIFLMSMVFGLACGQTMS), serve as a signal peptide directing secretion. 6 disulfides stabilise this stretch: Cys22–Cys72, Cys36–Cys87, Cys39–Cys125, Cys47–Cys103, Cys51–Cys105, and Cys108–Cys115. A glycan (N-linked (GlcNAc...) asparagine) is linked at Asn43. Positions 133 to 138 (VVEFSI) are excised as a propeptide.

Belongs to the glycoprotein hormones subunit beta family. In terms of assembly, heterodimer of a common alpha chain and a unique beta chain which confers biological specificity to thyrotropin, lutropin, follitropin and gonadotropin.

It is found in the secreted. Indispensable for the control of thyroid structure and metabolism. This chain is Thyrotropin subunit beta (TSHB), found in Equus caballus (Horse).